The chain runs to 512 residues: Alpha-amylase (512 aa).

An N-terminal signal peptide occupies residues Met-1–Ala-29. Residues Asn-133, Asp-190, Ala-210, Asp-212, Asp-223, Asp-229, Asp-231, and Asp-233 each coordinate Ca(2+). A Na(+)-binding site is contributed by Asp-190. Asp-212, Asp-223, and Asp-229 together coordinate Na(+). Asp-260 serves as the catalytic Nucleophile. A Ca(2+)-binding site is contributed by His-264. Catalysis depends on Glu-290, which acts as the Proton donor. Residues Gly-329, Tyr-331, His-435, Asp-436, and Asp-459 each contribute to the Ca(2+) site.

This sequence belongs to the glycosyl hydrolase 13 family. Monomer. It depends on Ca(2+) as a cofactor. Na(+) is required as a cofactor.

Its subcellular location is the secreted. The catalysed reaction is Endohydrolysis of (1-&gt;4)-alpha-D-glucosidic linkages in polysaccharides containing three or more (1-&gt;4)-alpha-linked D-glucose units.. In Bacillus licheniformis, this protein is Alpha-amylase (amyS).